Consider the following 648-residue polypeptide: Acyl-CoA-binding domain-containing protein 5 (648 aa).

The region spanning 13 to 107 is the ACB domain; the sequence is YPERFYAAAS…LEEADPGWYP (95 aa). An acyl-CoA-binding positions include K34, 49 to 53, and K75; that span reads YTLHQ. Kelch repeat units follow at residues 196–244, 256–306, 307–357, 359–408, 409–457, and 464–509; these read KMYM…KLTH, QLLS…LVGK, SLVI…VHAE, YLLI…TIGE, NWYI…LVVS, and IVVA…AVNN. S517 is modified (phosphoserine). Residues 520 to 632 adopt a coiled-coil conformation; it reads KVEGKADRII…AATMNAKRQS (113 aa). The span at 625 to 634 shows a compositional bias: polar residues; the sequence is TMNAKRQSSG. A disordered region spans residues 625-648; sequence TMNAKRQSSGGVWGWLAGTPPPKT.

This sequence belongs to the ACBP family. In terms of tissue distribution, expressed in roots, stems, leaves, flowers and siliques.

It localises to the cytoplasm. Functionally, binds medium- and long-chain acyl-CoA esters with very high affinity. Can interact in vitro with oleoyl-CoA, barely with palmitoyl-CoA, but not with arachidonyl-CoA. May function as an intracellular carrier of acyl-CoA esters. The chain is Acyl-CoA-binding domain-containing protein 5 (ACBP5) from Arabidopsis thaliana (Mouse-ear cress).